Here is a 105-residue protein sequence, read N- to C-terminus: Large ribosomal subunit protein bL21c (105 aa).

Belongs to the bacterial ribosomal protein bL21 family. In terms of assembly, part of the 50S ribosomal subunit.

It is found in the plastid. The protein resides in the chloroplast. Its function is as follows. This protein binds to 23S rRNA. This is Large ribosomal subunit protein bL21c from Phaeodactylum tricornutum (strain CCAP 1055/1).